The sequence spans 37 residues: Potassium channel toxin alpha-KTx 15.1 (37 aa).

The residue at position 1 (Gln1) is a Pyrrolidone carboxylic acid. Intrachain disulfides connect Cys8–Cys28, Cys13–Cys33, and Cys17–Cys35.

Belongs to the short scorpion toxin superfamily. Potassium channel inhibitor family. Alpha-KTx 15 subfamily. As to expression, expressed by the venom gland.

It is found in the secreted. Blocker of voltage-gated potassium channels (600 nM of the toxin induces a block of 25% of hERG currents). May also inhibit Kv4/KCND when coexpressed with DPP6 or DPP10. In adult rat brain, it blocks the transient potassium channels in cerebellum granular cells. Blocks potassium channels by a simple 'plugging mechanism', in which a single toxin molecule finds a specific receptor site in the external vestibule of the potassium channel and thereby occludes the outer entry to the potassium conducting pore. This Androctonus australis (Sahara scorpion) protein is Potassium channel toxin alpha-KTx 15.1.